We begin with the raw amino-acid sequence, 193 residues long: Partner of Y14 and mago (193 aa).

Disordered stretches follow at residues 1-27 and 118-142; these read MSTP…DGTW and IQEP…TKRL. Residues 122 to 137 are compositionally biased toward polar residues; the sequence is TLPSQSVPTESISQSD. A coiled-coil region spans residues 139–192; the sequence is TKRLKNLRKKLREIEFLEEKIKAGLLKSPDKDQKEKMSKKNEILNEIDILKNSI.

It belongs to the pym family. In terms of assembly, interacts (via N-terminus) with mago and tsu/Y14; the interaction is direct.

The protein resides in the cytoplasm. It localises to the nucleus. Its function is as follows. Regulator of the exon junction complex (EJC), a multiprotein complex that associates immediately upstream of the exon-exon junction on mRNAs and serves as a positional landmarks for the intron exon structure of genes and directs post-transcriptional processes in the cytoplasm such as mRNA export, nonsense-mediated mRNA decay (NMD) or translation. In Bombyx mori (Silk moth), this protein is Partner of Y14 and mago.